We begin with the raw amino-acid sequence, 539 residues long: Carboxypeptidase Y homolog A (539 aa).

Positions 1-17 (MKALTATLLVGTALAAV) are cleaved as a signal peptide. The propeptide occupies 18 to 122 (PPQQPIQVPT…KLEKYDLRVK (105 aa)). Cystine bridges form between C176-C416, C310-C324, C334-C357, C341-C350, and C379-C386. Residue N207 is glycosylated (N-linked (GlcNAc...) asparagine). The active site involves S263. D455 is an active-site residue. N506 carries N-linked (GlcNAc...) asparagine glycosylation. H517 is a catalytic residue.

This sequence belongs to the peptidase S10 family.

The protein localises to the vacuole. The enzyme catalyses Release of a C-terminal amino acid with broad specificity.. Functionally, vacuolar carboxypeptidase involved in degradation of small peptides. Digests preferentially peptides containing an aliphatic or hydrophobic residue in P1' position, as well as methionine, leucine or phenylalanine in P1 position of ester substrate. This is Carboxypeptidase Y homolog A (cpyA) from Coccidioides posadasii (strain C735) (Valley fever fungus).